We begin with the raw amino-acid sequence, 1189 residues long: Increased DNA methylation 1 (1189 aa).

Disordered regions lie at residues 475–498 and 523–597; these read KNLH…HDSL and SRDE…CRLL. Residues 523-532 are compositionally biased toward basic and acidic residues; it reads SRDERLRNEK. 2 stretches are compositionally biased toward basic residues: residues 541 to 550 and 565 to 590; these read KKGRKKARKH and NKGK…KRNN. A PHD-type 1 zinc finger spans residues 726-771; it reads DDSCGVCGDGGELICCDNCPSTFHQACLSMQVLPEGSWYCSSCTCW. The PHD-type 2; degenerate zinc-finger motif lies at 767 to 823; sequence SCTCWICSELVSDNAERSQDFKCSQCAHKYHGTCLQGISKRRKLFPETYFCGKNCEK. The N-acetyltransferase domain occupies 879-1024; the sequence is MEESFLSMVD…GTTLLKKTLY (146 aa). The tract at residues 1031–1157 is disordered; the sequence is TMKGVCLSKE…SSSSAALEEV (127 aa). Basic and acidic residues-rich tracts occupy residues 1038–1050, 1102–1114, and 1129–1145; these read SKER…KEAD, NPSR…DRPN, and CLQK…KETT. Low complexity predominate over residues 1147 to 1157; sequence ASSSSAALEEV.

In terms of assembly, interacts (via N-terminus) with IDM2. Interacts with IMD3. Part of a complex made of MBD7, IDM1, IDM2 and IDM3. In terms of tissue distribution, expressed in cotyledons and hypocotyls in young seedlings.

The protein localises to the nucleus. Histone H3 acetyltransferase that binds methylated DNA at chromatin sites lacking histone H3K4 di- or trimethylation and catalyzes H3K18 and H3K23 acetylation. Prevents the transcriptional silencing of transgenes and of some endogenous genes. Requires the presence of IDM2 for efficient H3K18 acetylation, but not for H3K23 acetylation. The chain is Increased DNA methylation 1 from Arabidopsis thaliana (Mouse-ear cress).